The primary structure comprises 331 residues: MSLPEFSMRQLLEAGVHFGHQSHRWNPKMADYIFGVRNNIHIVDLTQTVPLLHRALQAISDTVAKGGRVLFVGTKRQAQDAVADAAKRSAQYFVNSRWLGGTLTNWKTISGSIRRLRHLEDVLSSADANAYTKKERLELQRERDKLNRSLGGIKDMGGLPDLIFVIDTNKEDIAIQEAQRLGIPVAAIVDTNCDPKGITYLVPGNDDAGRAIALYCDLVARAVIDGISRAQGDVGIDIGAAAQPLREDLPAAQATTFQGLPGPRGTPDDLKKLPGVSGAIEKKFNDLGIFHFWQLAELDQATAHQIGEELGLPSRADAWVAQAKSLTAEAE.

It belongs to the universal ribosomal protein uS2 family.

The chain is Small ribosomal subunit protein uS2 from Rhodopseudomonas palustris (strain ATCC BAA-98 / CGA009).